We begin with the raw amino-acid sequence, 68 residues long: Large ribosomal subunit protein uL29 (68 aa).

This sequence belongs to the universal ribosomal protein uL29 family.

The protein is Large ribosomal subunit protein uL29 of Nitrobacter winogradskyi (strain ATCC 25391 / DSM 10237 / CIP 104748 / NCIMB 11846 / Nb-255).